The primary structure comprises 311 residues: MTENNRLSVKLPGLDLKNPIIPASGCFGFGEEYAKYYDLNKLGSIMVKATTLHPRFGNPTPRVAETASGMLNAIGLQNPGLEVIMAEKLPWLNENFPDLPIIANVAGSEEDDYVAVCAKIGDAPNVKVIELNISCPNVKHGGQAFGTDPDVAAALVKACKAVSKVPLYVKLSPNVTDIVPIAKAVEAAGADGLTMINTLMGVRFDLKTRKPVLANITGGLSGPAIKPVALKLIHQVAQVVDIPIIGMGGVESAQDVLEMYMAGASAVAVGTANFADPFVCPKIIEKLPEVMDQYGIDSLENLIQEVKNSKK.

FMN is bound by residues Ser-24 and 48 to 49 (KA). Residues Lys-48 and 72-76 (NAIGL) contribute to the substrate site. Residues Asn-104 and Asn-132 each coordinate FMN. Residue Asn-132 coordinates substrate. Cys-135 (nucleophile) is an active-site residue. Positions 170 and 196 each coordinate FMN. 197 to 198 (NT) serves as a coordination point for substrate. FMN-binding positions include Gly-222, 248–249 (GG), and 270–271 (GT).

This sequence belongs to the dihydroorotate dehydrogenase family. Type 1 subfamily. Heterotetramer of 2 PyrK and 2 PyrD type B subunits. FMN serves as cofactor.

The protein resides in the cytoplasm. The enzyme catalyses (S)-dihydroorotate + NAD(+) = orotate + NADH + H(+). Its pathway is pyrimidine metabolism; UMP biosynthesis via de novo pathway; orotate from (S)-dihydroorotate (NAD(+) route): step 1/1. Catalyzes the conversion of dihydroorotate to orotate with NAD(+) as electron acceptor. In Lactococcus lactis subsp. lactis (strain IL1403) (Streptococcus lactis), this protein is Dihydroorotate dehydrogenase B (NAD(+)), catalytic subunit (pyrDB).